Here is a 293-residue protein sequence, read N- to C-terminus: NAD kinase (293 aa).

The Proton acceptor role is filled by aspartate 72. Residues 72 to 73 (DG), 146 to 147 (ND), arginine 157, arginine 174, aspartate 176, 187 to 192 (TAYALS), and glutamine 247 each bind NAD(+).

It belongs to the NAD kinase family. A divalent metal cation serves as cofactor.

It is found in the cytoplasm. The enzyme catalyses NAD(+) + ATP = ADP + NADP(+) + H(+). Its function is as follows. Involved in the regulation of the intracellular balance of NAD and NADP, and is a key enzyme in the biosynthesis of NADP. Catalyzes specifically the phosphorylation on 2'-hydroxyl of the adenosine moiety of NAD to yield NADP. The chain is NAD kinase from Chromohalobacter salexigens (strain ATCC BAA-138 / DSM 3043 / CIP 106854 / NCIMB 13768 / 1H11).